A 95-amino-acid polypeptide reads, in one-letter code: Co-chaperonin GroES (95 aa).

Residues 20 to 45 (KTKGGLIIPDSAKEKPAEGEITSVGE) are disordered.

This sequence belongs to the GroES chaperonin family. In terms of assembly, heptamer of 7 subunits arranged in a ring. Interacts with the chaperonin GroEL.

The protein resides in the cytoplasm. Together with the chaperonin GroEL, plays an essential role in assisting protein folding. The GroEL-GroES system forms a nano-cage that allows encapsulation of the non-native substrate proteins and provides a physical environment optimized to promote and accelerate protein folding. GroES binds to the apical surface of the GroEL ring, thereby capping the opening of the GroEL channel. The sequence is that of Co-chaperonin GroES from Paracoccus denitrificans.